Here is a 314-residue protein sequence, read N- to C-terminus: DNA-directed RNA polymerase subunit alpha (314 aa).

Positions 1-228 (MIEIEKPNIE…EHLNIFVGLT (228 aa)) are alpha N-terminal domain (alpha-NTD). The interval 245–314 (KEKVLEMTIE…ELGLGLRNEE (70 aa)) is alpha C-terminal domain (alpha-CTD).

Belongs to the RNA polymerase alpha chain family. Homodimer. The RNAP catalytic core consists of 2 alpha, 1 beta, 1 beta' and 1 omega subunit. When a sigma factor is associated with the core the holoenzyme is formed, which can initiate transcription.

It catalyses the reaction RNA(n) + a ribonucleoside 5'-triphosphate = RNA(n+1) + diphosphate. Its function is as follows. DNA-dependent RNA polymerase catalyzes the transcription of DNA into RNA using the four ribonucleoside triphosphates as substrates. The protein is DNA-directed RNA polymerase subunit alpha of Shouchella clausii (strain KSM-K16) (Alkalihalobacillus clausii).